A 383-amino-acid chain; its full sequence is Probable tRNA sulfurtransferase (383 aa).

A THUMP domain is found at 58 to 158 (NEIIHILKMI…ENKSYVWFDK (101 aa)). Residues 176 to 177 (LL), 201 to 202 (TF), Arg-259, Gly-281, and Gln-290 each bind ATP.

Belongs to the ThiI family.

Its subcellular location is the cytoplasm. The enzyme catalyses [ThiI sulfur-carrier protein]-S-sulfanyl-L-cysteine + a uridine in tRNA + 2 reduced [2Fe-2S]-[ferredoxin] + ATP + H(+) = [ThiI sulfur-carrier protein]-L-cysteine + a 4-thiouridine in tRNA + 2 oxidized [2Fe-2S]-[ferredoxin] + AMP + diphosphate. The catalysed reaction is [ThiS sulfur-carrier protein]-C-terminal Gly-Gly-AMP + S-sulfanyl-L-cysteinyl-[cysteine desulfurase] + AH2 = [ThiS sulfur-carrier protein]-C-terminal-Gly-aminoethanethioate + L-cysteinyl-[cysteine desulfurase] + A + AMP + 2 H(+). It functions in the pathway cofactor biosynthesis; thiamine diphosphate biosynthesis. Catalyzes the ATP-dependent transfer of a sulfur to tRNA to produce 4-thiouridine in position 8 of tRNAs, which functions as a near-UV photosensor. Also catalyzes the transfer of sulfur to the sulfur carrier protein ThiS, forming ThiS-thiocarboxylate. This is a step in the synthesis of thiazole, in the thiamine biosynthesis pathway. The sulfur is donated as persulfide by IscS. The chain is Probable tRNA sulfurtransferase from Malacoplasma penetrans (strain HF-2) (Mycoplasma penetrans).